A 98-amino-acid polypeptide reads, in one-letter code: Secreted LysM effector Mgx1LysM (98 aa).

The signal sequence occupies residues 1–18; that stretch reads MKVTTIIAALLSVAVVDA. Disulfide bonds link cysteine 31–cysteine 89 and cysteine 62–cysteine 97. Residues 37–85 form the LysM domain; it reads IPYVVKKGDTLTHIAHDIYKRKVGICDLAYTNHIGKNPNLIYAGQTLLI. Positions 44, 48, 75, and 77 each coordinate chitin.

The protein belongs to the secreted LysM effector family. In terms of assembly, forms homodimers in a chitin-independent manner through interactions at the N-termini of Mgx1LysM monomers. Homodimers are further polymerized in a chitin-dependent manner.

It is found in the secreted. It localises to the cell wall. Secreted effector that enables the plant pathogenic fungus to manipulate host defenses for successful infection. Binds chitin and suppresses the chitin-induced reactive oxygen species (ROS) burst. Chitin-induced polymerization of homodimers forms a contiguous Mg1LysM highly oligomeric super-complexe that is anchored to the chitin in the fungal cell wall to prevent hydrolysis by host chitinases. This chain is Secreted LysM effector Mgx1LysM, found in Zymoseptoria tritici (strain ST99CH_3D7).